The primary structure comprises 260 residues: Dolichol-phosphate mannosyltransferase subunit 1 (260 aa).

A disordered region spans residues 1–25 (MASTGASRSLAASPRPPQGRSSRQD). Ala-2 carries the N-acetylalanine modification. Residues Ser-3 and Ser-9 each carry the phosphoserine modification. GDP-alpha-D-mannose is bound by residues Pro-32, Tyr-34, Glu-36, Ile-63, Asp-65, Asp-118, Ala-119, Asp-120, Arg-147, Arg-234, and Lys-240. Residue Asp-120 coordinates Mg(2+). Residue Asp-120 coordinates Mn(2+).

It belongs to the glycosyltransferase 2 family. In terms of assembly, component of the dolichol-phosphate mannose (DPM) synthase complex composed of DPM1, DPM2 and DPM3; within the complex, directly interacts with DPM3. This interaction may stabilize DPM1. Mg(2+) is required as a cofactor. Mn(2+) serves as cofactor. It depends on Ca(2+) as a cofactor.

The protein resides in the endoplasmic reticulum. It catalyses the reaction a di-trans,poly-cis-dolichyl phosphate + GDP-alpha-D-mannose = a di-trans,poly-cis-dolichyl beta-D-mannosyl phosphate + GDP. It participates in protein modification; protein glycosylation. Functionally, transfers mannose from GDP-mannose to dolichol monophosphate to form dolichol phosphate mannose (Dol-P-Man) which is the mannosyl donor in pathways leading to N-glycosylation, glycosyl phosphatidylinositol membrane anchoring, and O-mannosylation of proteins; catalytic subunit of the dolichol-phosphate mannose (DPM) synthase complex. The polypeptide is Dolichol-phosphate mannosyltransferase subunit 1 (Dpm1) (Mus musculus (Mouse)).